Consider the following 159-residue polypeptide: Endoribonuclease YbeY (159 aa).

Zn(2+) contacts are provided by His-123, His-127, and His-133.

Belongs to the endoribonuclease YbeY family. Requires Zn(2+) as cofactor.

The protein localises to the cytoplasm. Single strand-specific metallo-endoribonuclease involved in late-stage 70S ribosome quality control and in maturation of the 3' terminus of the 16S rRNA. This chain is Endoribonuclease YbeY, found in Bacillus pumilus (strain SAFR-032).